Consider the following 645-residue polypeptide: Acetyl-coenzyme A synthetase (645 aa).

CoA-binding positions include 190-193 (RGGR) and T309. Residues 385–387 (GEP), 409–414 (DTWWQT), D498, and R513 each bind ATP. S521 is a CoA binding site. R524 is an ATP binding site. Residues V535, H537, and V540 each coordinate Mg(2+). Residue R582 participates in CoA binding. Residue K607 is modified to N6-acetyllysine.

This sequence belongs to the ATP-dependent AMP-binding enzyme family. The cofactor is Mg(2+). In terms of processing, acetylated. Deacetylation by the SIR2-homolog deacetylase activates the enzyme.

The catalysed reaction is acetate + ATP + CoA = acetyl-CoA + AMP + diphosphate. Its function is as follows. Catalyzes the conversion of acetate into acetyl-CoA (AcCoA), an essential intermediate at the junction of anabolic and catabolic pathways. AcsA undergoes a two-step reaction. In the first half reaction, AcsA combines acetate with ATP to form acetyl-adenylate (AcAMP) intermediate. In the second half reaction, it can then transfer the acetyl group from AcAMP to the sulfhydryl group of CoA, forming the product AcCoA. The sequence is that of Acetyl-coenzyme A synthetase from Methylocella silvestris (strain DSM 15510 / CIP 108128 / LMG 27833 / NCIMB 13906 / BL2).